Here is a 79-residue protein sequence, read N- to C-terminus: UPF0181 protein PC1_1931 (79 aa).

A disordered region spans residues 54–79 (FDEDDDTVNDSDEEHYFDDGEEEDEQ).

This sequence belongs to the UPF0181 family.

This Pectobacterium carotovorum subsp. carotovorum (strain PC1) protein is UPF0181 protein PC1_1931.